Here is a 107-residue protein sequence, read N- to C-terminus: Large ribosomal subunit protein mL55 (107 aa).

The transit peptide at 1-16 (MLLKQLPQAVQQIRCI) directs the protein to the mitochondrion.

It belongs to the mitochondrion-specific ribosomal protein mL55 family. Component of the mitochondrial ribosome large subunit (39S) which comprises a 16S rRNA and about 50 distinct proteins. Ubiquitously expressed (at protein level).

It localises to the mitochondrion. Its function is as follows. Involved in mitochondrial biogenesis and G2/M phase cell cycle progression. The protein is Large ribosomal subunit protein mL55 (mRpL55) of Drosophila melanogaster (Fruit fly).